We begin with the raw amino-acid sequence, 237 residues long: Ribosomal RNA large subunit methyltransferase E (237 aa).

S-adenosyl-L-methionine is bound by residues Gly-80, Trp-82, Asp-108, Asp-124, and Asp-148. The active-site Proton acceptor is Lys-188.

It belongs to the class I-like SAM-binding methyltransferase superfamily. RNA methyltransferase RlmE family.

It is found in the cytoplasm. It catalyses the reaction uridine(2552) in 23S rRNA + S-adenosyl-L-methionine = 2'-O-methyluridine(2552) in 23S rRNA + S-adenosyl-L-homocysteine + H(+). Its function is as follows. Specifically methylates the uridine in position 2552 of 23S rRNA at the 2'-O position of the ribose in the fully assembled 50S ribosomal subunit. The sequence is that of Ribosomal RNA large subunit methyltransferase E from Jannaschia sp. (strain CCS1).